The following is a 376-amino-acid chain: Beta sliding clamp (376 aa).

It belongs to the beta sliding clamp family. In terms of assembly, forms a ring-shaped head-to-tail homodimer around DNA which binds and tethers DNA polymerases and other proteins to the DNA. The DNA replisome complex has a single clamp-loading complex (3 tau and 1 each of delta, delta', psi and chi subunits) which binds 3 Pol III cores (1 core on the leading strand and 2 on the lagging strand) each with a beta sliding clamp dimer. Additional proteins in the replisome are other copies of gamma, psi and chi, Ssb, DNA helicase and RNA primase.

It is found in the cytoplasm. In terms of biological role, confers DNA tethering and processivity to DNA polymerases and other proteins. Acts as a clamp, forming a ring around DNA (a reaction catalyzed by the clamp-loading complex) which diffuses in an ATP-independent manner freely and bidirectionally along dsDNA. Initially characterized for its ability to contact the catalytic subunit of DNA polymerase III (Pol III), a complex, multichain enzyme responsible for most of the replicative synthesis in bacteria; Pol III exhibits 3'-5' exonuclease proofreading activity. The beta chain is required for initiation of replication as well as for processivity of DNA replication. In Streptomyces coelicolor (strain ATCC BAA-471 / A3(2) / M145), this protein is Beta sliding clamp (dnaN).